Here is a 391-residue protein sequence, read N- to C-terminus: Na(+)/H(+) antiporter NhaA (391 aa).

Helical transmembrane passes span 14 to 34, 59 to 79, 95 to 115, 124 to 144, 154 to 174, 177 to 197, 213 to 233, 261 to 281, 287 to 307, 328 to 348, and 363 to 383; these read AGGI…NSPL, LLLW…GLEV, SLPT…YLFF, VGWA…MALL, VFLL…IALF, TDLS…LVAL, IILW…GVVI, FLIL…NVGF, PVPV…VLLF, IAPV…IASL, and IGIL…LSKV.

This sequence belongs to the NhaA Na(+)/H(+) (TC 2.A.33) antiporter family.

The protein resides in the cell inner membrane. It carries out the reaction Na(+)(in) + 2 H(+)(out) = Na(+)(out) + 2 H(+)(in). Its function is as follows. Na(+)/H(+) antiporter that extrudes sodium in exchange for external protons. This is Na(+)/H(+) antiporter NhaA from Shewanella amazonensis (strain ATCC BAA-1098 / SB2B).